The sequence spans 162 residues: Large ribosomal subunit protein uL10 (162 aa).

The protein belongs to the universal ribosomal protein uL10 family. Part of the ribosomal stalk of the 50S ribosomal subunit. The N-terminus interacts with L11 and the large rRNA to form the base of the stalk. The C-terminus forms an elongated spine to which L12 dimers bind in a sequential fashion forming a multimeric L10(L12)X complex.

Forms part of the ribosomal stalk, playing a central role in the interaction of the ribosome with GTP-bound translation factors. The polypeptide is Large ribosomal subunit protein uL10 (Borreliella afzelii (strain PKo) (Borrelia afzelii)).